A 228-amino-acid polypeptide reads, in one-letter code: Eukaryotic translation initiation factor 4E-2 (228 aa).

Cys130 and Cys134 form a disulfide bridge.

Belongs to the eukaryotic initiation factor 4E family. In terms of assembly, eIF4F is a multi-subunit complex, the composition of which varies with external and internal environmental conditions. It is composed of at least eIF4A, eIF4E and eIF4G. eIF4E is also known to interact with other partners. As to expression, highly expressed in all somatic tissues.

Functionally, recognizes and binds the 7-methylguanosine-containing mRNA cap during an early step in the initiation of protein synthesis and facilitates ribosome binding by inducing the unwinding of the mRNAs secondary structures. All 5 eIF4E proteins bind monomethyl cap structures. Only ife-1, ife-2 and ife-5 bind trimethyl cap structures which result from trans-splicing. Translation of trimethyl cap structure mRNAs may be regulated by intracellular redox state; disulfide bonds change the width and depth of the cap-binding cavity determining selectivity to mRNA caps. Probably by regulating mRNA translation in somatic cells, negatively regulates lifespan independently of daf-2/insulin and let-363/TOR pathways. Negatively regulates resistance to oxidative stress. May play a role in embryonic development. The chain is Eukaryotic translation initiation factor 4E-2 (ife-2) from Caenorhabditis elegans.